A 292-amino-acid chain; its full sequence is 4-hydroxy-tetrahydrodipicolinate synthase (292 aa).

Position 45 (Thr-45) interacts with pyruvate. Tyr-133 acts as the Proton donor/acceptor in catalysis. Residue Lys-161 is the Schiff-base intermediate with substrate of the active site. Ile-203 serves as a coordination point for pyruvate.

It belongs to the DapA family. In terms of assembly, homotetramer; dimer of dimers.

Its subcellular location is the cytoplasm. The enzyme catalyses L-aspartate 4-semialdehyde + pyruvate = (2S,4S)-4-hydroxy-2,3,4,5-tetrahydrodipicolinate + H2O + H(+). It functions in the pathway amino-acid biosynthesis; L-lysine biosynthesis via DAP pathway; (S)-tetrahydrodipicolinate from L-aspartate: step 3/4. Functionally, catalyzes the condensation of (S)-aspartate-beta-semialdehyde [(S)-ASA] and pyruvate to 4-hydroxy-tetrahydrodipicolinate (HTPA). In Acidiphilium cryptum (strain JF-5), this protein is 4-hydroxy-tetrahydrodipicolinate synthase.